The primary structure comprises 239 residues: DNA repair protein RecO (239 aa).

The protein belongs to the RecO family.

In terms of biological role, involved in DNA repair and RecF pathway recombination. The sequence is that of DNA repair protein RecO from Cereibacter sphaeroides (strain KD131 / KCTC 12085) (Rhodobacter sphaeroides).